Here is a 50-residue protein sequence, read N- to C-terminus: U3-ctenitoxin-Asp1a (50 aa).

Expressed by the venom gland.

The protein resides in the secreted. Functionally, possible neurotoxin. The polypeptide is U3-ctenitoxin-Asp1a (Ancylometes sp. (South American fishing spider)).